The following is a 1178-amino-acid chain: DNA-directed RNA polymerase subunit beta (1178 aa).

Residues Met-1–Asn-37 form a disordered region. Residues Val-17–Pro-33 are compositionally biased toward low complexity.

This sequence belongs to the RNA polymerase beta chain family. In terms of assembly, the RNAP catalytic core consists of 2 alpha, 1 beta, 1 beta' and 1 omega subunit. When a sigma factor is associated with the core the holoenzyme is formed, which can initiate transcription.

It carries out the reaction RNA(n) + a ribonucleoside 5'-triphosphate = RNA(n+1) + diphosphate. Functionally, DNA-dependent RNA polymerase catalyzes the transcription of DNA into RNA using the four ribonucleoside triphosphates as substrates. The chain is DNA-directed RNA polymerase subunit beta from Mycobacterium leprae (strain Br4923).